The chain runs to 312 residues: MAEEKSKSSAMDAFVKLEKVGEGTYGKVYRAMEKSTGKIVALKKTRLHEDEEGVPPTTLREVSLLRMLSRDPHVVRLLDVKQGQNKEGKTVLYLVFEYMDTDLKKYIRSFKQTGESIAPMNVKSLMYQLCKGVAFCHGHGVLHRDLKPHNLLMDRKTMMLKIADLGLARAYTLPIKKYTHEILTLWYRAPEVLLGATHYSPAVDMWSVACIFAELVTQKALFPGDSELQQLLHIFRLLGTPNEEIWPGVSTLVDWHEYPQWTAQPISSAVPGLDEKGLNLLSEMLHYEPSRRISAKKAMEHPYFDELDKSGL.

One can recognise a Protein kinase domain in the interval 14-304; that stretch reads FVKLEKVGEG…AKKAMEHPYF (291 aa). Residues 20–28 and Lys-43 contribute to the ATP site; that span reads VGEGTYGKV. Position 24 is a phosphothreonine (Thr-24). Tyr-25 is modified (phosphotyrosine). Asp-145 acts as the Proton acceptor in catalysis. Thr-179 bears the Phosphothreonine; by CAK mark.

It belongs to the protein kinase superfamily. CMGC Ser/Thr protein kinase family. CDC2/CDKX subfamily.

The catalysed reaction is L-seryl-[protein] + ATP = O-phospho-L-seryl-[protein] + ADP + H(+). It carries out the reaction L-threonyl-[protein] + ATP = O-phospho-L-threonyl-[protein] + ADP + H(+). It catalyses the reaction [DNA-directed RNA polymerase] + ATP = phospho-[DNA-directed RNA polymerase] + ADP + H(+). Its function is as follows. Plays a key role in the control of the eukaryotic cell cycle. The sequence is that of Cell division control protein 2 homolog D (CDC2D) from Antirrhinum majus (Garden snapdragon).